We begin with the raw amino-acid sequence, 458 residues long: Bifunctional protein GlmU (458 aa).

The interval 1-224 (MTVIALAAGK…PKVAVGVNNQ (224 aa)) is pyrophosphorylase. Residues 6 to 9 (LAAG), K20, Q71, and 76 to 77 (GT) contribute to the UDP-N-acetyl-alpha-D-glucosamine site. D99 lines the Mg(2+) pocket. UDP-N-acetyl-alpha-D-glucosamine-binding residues include G136, E150, N165, and N222. Residue N222 participates in Mg(2+) binding. Residues 225–245 (LELARATRLLFKRKALRLMED) form a linker region. The segment at 246–458 (GVLMIDPRTV…TAETEEKEQV (213 aa)) is N-acetyltransferase. UDP-N-acetyl-alpha-D-glucosamine is bound by residues R328 and K346. H358 functions as the Proton acceptor in the catalytic mechanism. UDP-N-acetyl-alpha-D-glucosamine-binding residues include Y361 and N372. Acetyl-CoA-binding positions include 381–382 (NY), S401, S419, and R436.

In the N-terminal section; belongs to the N-acetylglucosamine-1-phosphate uridyltransferase family. This sequence in the C-terminal section; belongs to the transferase hexapeptide repeat family. Homotrimer. The cofactor is Mg(2+).

The protein resides in the cytoplasm. It catalyses the reaction alpha-D-glucosamine 1-phosphate + acetyl-CoA = N-acetyl-alpha-D-glucosamine 1-phosphate + CoA + H(+). The enzyme catalyses N-acetyl-alpha-D-glucosamine 1-phosphate + UTP + H(+) = UDP-N-acetyl-alpha-D-glucosamine + diphosphate. The protein operates within nucleotide-sugar biosynthesis; UDP-N-acetyl-alpha-D-glucosamine biosynthesis; N-acetyl-alpha-D-glucosamine 1-phosphate from alpha-D-glucosamine 6-phosphate (route II): step 2/2. Its pathway is nucleotide-sugar biosynthesis; UDP-N-acetyl-alpha-D-glucosamine biosynthesis; UDP-N-acetyl-alpha-D-glucosamine from N-acetyl-alpha-D-glucosamine 1-phosphate: step 1/1. It functions in the pathway bacterial outer membrane biogenesis; LPS lipid A biosynthesis. In terms of biological role, catalyzes the last two sequential reactions in the de novo biosynthetic pathway for UDP-N-acetylglucosamine (UDP-GlcNAc). The C-terminal domain catalyzes the transfer of acetyl group from acetyl coenzyme A to glucosamine-1-phosphate (GlcN-1-P) to produce N-acetylglucosamine-1-phosphate (GlcNAc-1-P), which is converted into UDP-GlcNAc by the transfer of uridine 5-monophosphate (from uridine 5-triphosphate), a reaction catalyzed by the N-terminal domain. This is Bifunctional protein GlmU from Bdellovibrio bacteriovorus (strain ATCC 15356 / DSM 50701 / NCIMB 9529 / HD100).